The chain runs to 138 residues: Bis(5'-nucleosyl)-tetraphosphatase [asymmetrical] (138 aa).

The region spanning M1 to S132 is the Nudix hydrolase domain. The short motif at G37–N58 is the Nudix box element.

Belongs to the Nudix hydrolase family. Monomer. It depends on Mg(2+) as a cofactor. Requires Co(2+) as cofactor. The cofactor is Mn(2+). Zn(2+) is required as a cofactor. Ca(2+) serves as cofactor.

It catalyses the reaction P(1),P(4)-bis(5'-adenosyl) tetraphosphate + H2O = AMP + ATP + 2 H(+). Functionally, asymmetrically hydrolyzes Ap4A to yield AMP and ATP. The sequence is that of Bis(5'-nucleosyl)-tetraphosphatase [asymmetrical] (ndx-4) from Caenorhabditis elegans.